The following is a 465-amino-acid chain: Ribulose bisphosphate carboxylase large chain (465 aa).

Residue K4 is modified to N6,N6,N6-trimethyllysine. Residues N113 and T163 each contribute to the substrate site. K165 acts as the Proton acceptor in catalysis. K167 serves as a coordination point for substrate. Residues K191, D193, and E194 each contribute to the Mg(2+) site. K191 is modified (N6-carboxylysine). The Proton acceptor role is filled by H284. Residues R285, H317, and S369 each contribute to the substrate site.

It belongs to the RuBisCO large chain family. Type I subfamily. Heterohexadecamer of 8 large chains and 8 small chains; disulfide-linked. The disulfide link is formed within the large subunit homodimers. Mg(2+) is required as a cofactor. In terms of processing, the disulfide bond which can form in the large chain dimeric partners within the hexadecamer appears to be associated with oxidative stress and protein turnover.

The protein resides in the plastid. It is found in the chloroplast. It carries out the reaction 2 (2R)-3-phosphoglycerate + 2 H(+) = D-ribulose 1,5-bisphosphate + CO2 + H2O. The enzyme catalyses D-ribulose 1,5-bisphosphate + O2 = 2-phosphoglycolate + (2R)-3-phosphoglycerate + 2 H(+). RuBisCO catalyzes two reactions: the carboxylation of D-ribulose 1,5-bisphosphate, the primary event in carbon dioxide fixation, as well as the oxidative fragmentation of the pentose substrate in the photorespiration process. Both reactions occur simultaneously and in competition at the same active site. In Morella cerifera (Wax myrtle), this protein is Ribulose bisphosphate carboxylase large chain.